Here is a 427-residue protein sequence, read N- to C-terminus: Serine--tRNA ligase (427 aa).

An L-serine-binding site is contributed by T231–E233. R262–E264 is an ATP binding site. Residue E285 participates in L-serine binding. E349–S352 contributes to the ATP binding site. S385 contributes to the L-serine binding site.

The protein belongs to the class-II aminoacyl-tRNA synthetase family. Type-1 seryl-tRNA synthetase subfamily. Homodimer. The tRNA molecule binds across the dimer.

It localises to the cytoplasm. The catalysed reaction is tRNA(Ser) + L-serine + ATP = L-seryl-tRNA(Ser) + AMP + diphosphate + H(+). It carries out the reaction tRNA(Sec) + L-serine + ATP = L-seryl-tRNA(Sec) + AMP + diphosphate + H(+). Its pathway is aminoacyl-tRNA biosynthesis; selenocysteinyl-tRNA(Sec) biosynthesis; L-seryl-tRNA(Sec) from L-serine and tRNA(Sec): step 1/1. Catalyzes the attachment of serine to tRNA(Ser). Is also able to aminoacylate tRNA(Sec) with serine, to form the misacylated tRNA L-seryl-tRNA(Sec), which will be further converted into selenocysteinyl-tRNA(Sec). The sequence is that of Serine--tRNA ligase from Listeria innocua serovar 6a (strain ATCC BAA-680 / CLIP 11262).